A 205-amino-acid chain; its full sequence is tRNA (pseudouridine(54)-N(1))-methyltransferase (205 aa).

Residues L136, G156, 179-184, and C189 contribute to the S-adenosyl-L-methionine site; that span reads LSPLEL.

Belongs to the methyltransferase superfamily. TrmY family. Homodimer.

It is found in the cytoplasm. It catalyses the reaction pseudouridine(54) in tRNA + S-adenosyl-L-methionine = N(1)-methylpseudouridine(54) in tRNA + S-adenosyl-L-homocysteine + H(+). Specifically catalyzes the N1-methylation of pseudouridine at position 54 (Psi54) in tRNAs. The polypeptide is tRNA (pseudouridine(54)-N(1))-methyltransferase (Methanocaldococcus jannaschii (strain ATCC 43067 / DSM 2661 / JAL-1 / JCM 10045 / NBRC 100440) (Methanococcus jannaschii)).